We begin with the raw amino-acid sequence, 62 residues long: Large ribosomal subunit protein bL28 (62 aa).

It belongs to the bacterial ribosomal protein bL28 family.

The sequence is that of Large ribosomal subunit protein bL28 from Ruminiclostridium cellulolyticum (strain ATCC 35319 / DSM 5812 / JCM 6584 / H10) (Clostridium cellulolyticum).